The chain runs to 489 residues: 3-octaprenyl-4-hydroxybenzoate carboxy-lyase (489 aa).

Residue Asn-172 coordinates Mn(2+). Prenylated FMN-binding positions include 175–177 (IYR), 189–191 (RWL), and 194–195 (RG). Glu-238 lines the Mn(2+) pocket. The active-site Proton donor is the Asp-287.

This sequence belongs to the UbiD family. In terms of assembly, homohexamer. Prenylated FMN is required as a cofactor. It depends on Mn(2+) as a cofactor.

Its subcellular location is the cell membrane. The enzyme catalyses a 4-hydroxy-3-(all-trans-polyprenyl)benzoate + H(+) = a 2-(all-trans-polyprenyl)phenol + CO2. It participates in cofactor biosynthesis; ubiquinone biosynthesis. In terms of biological role, catalyzes the decarboxylation of 3-octaprenyl-4-hydroxy benzoate to 2-octaprenylphenol, an intermediate step in ubiquinone biosynthesis. This Tolumonas auensis (strain DSM 9187 / NBRC 110442 / TA 4) protein is 3-octaprenyl-4-hydroxybenzoate carboxy-lyase.